The primary structure comprises 137 residues: uncharacterized protein (137 aa).

2 helical membrane passes run 26 to 42 (CSLC…FFAM) and 52 to 69 (ASIP…GSIL).

It localises to the membrane. This is an uncharacterized protein from Saccharomyces cerevisiae (strain ATCC 204508 / S288c) (Baker's yeast).